The sequence spans 401 residues: Acetate kinase (401 aa).

Asparagine 7 serves as a coordination point for Mg(2+). Lysine 14 lines the ATP pocket. Arginine 91 is a substrate binding site. Aspartate 148 acts as the Proton donor/acceptor in catalysis. ATP contacts are provided by residues 208–212 (HLGNG), 283–285 (DFR), and 332–336 (GVGEN). Residue glutamate 385 participates in Mg(2+) binding.

It belongs to the acetokinase family. In terms of assembly, homodimer. The cofactor is Mg(2+). Mn(2+) is required as a cofactor.

The protein resides in the cytoplasm. The catalysed reaction is acetate + ATP = acetyl phosphate + ADP. The protein operates within metabolic intermediate biosynthesis; acetyl-CoA biosynthesis; acetyl-CoA from acetate: step 1/2. Its function is as follows. Catalyzes the formation of acetyl phosphate from acetate and ATP. Can also catalyze the reverse reaction. The chain is Acetate kinase from Thermoanaerobacter pseudethanolicus (strain ATCC 33223 / 39E) (Clostridium thermohydrosulfuricum).